Consider the following 67-residue polypeptide: Cold shock protein ScoF (67 aa).

The CSD domain occupies 4–64; sequence GTVKWFNSEK…GQKGPQAENI (61 aa).

It localises to the cytoplasm. In Streptomyces coelicolor (strain ATCC BAA-471 / A3(2) / M145), this protein is Cold shock protein ScoF (scoF).